The chain runs to 111 residues: Probable 4-amino-4-deoxy-L-arabinose-phosphoundecaprenol flippase subunit ArnE (111 aa).

The next 3 membrane-spanning stretches (helical) occupy residues 38 to 58 (LWLGLALICMGAAMVLWLLVL), 61 to 81 (LPVGIAYPMLSLNFVWVTLAA), and 89 to 109 (VLPRHWLGVALIISGIIILGS). In terms of domain architecture, EamA spans 40–109 (LGLALICMGA…IISGIIILGS (70 aa)).

The protein belongs to the ArnE family. Heterodimer of ArnE and ArnF.

It is found in the cell inner membrane. It participates in bacterial outer membrane biogenesis; lipopolysaccharide biosynthesis. Translocates 4-amino-4-deoxy-L-arabinose-phosphoundecaprenol (alpha-L-Ara4N-phosphoundecaprenol) from the cytoplasmic to the periplasmic side of the inner membrane. This Salmonella paratyphi A (strain ATCC 9150 / SARB42) protein is Probable 4-amino-4-deoxy-L-arabinose-phosphoundecaprenol flippase subunit ArnE.